The sequence spans 1801 residues: Focadhesin (1801 aa).

N6-acetyllysine is present on Lys819.

As to quaternary structure, interacts with VCL. Ubiquitous. High expression in brain followed by testis, muscle, pancreas, heart, ovary, small intestine, placenta, prostate, thymus, kidney, colon, liver, lung, spleen and leukocytes. Expression is reduced in most glioblastomas and all glioblastoma cell lines.

It localises to the cell junction. The protein resides in the focal adhesion. It is found in the cytoplasm. Its subcellular location is the cytosol. Required for the maintenance of SKIC2 and SKIC3 proteostatic levels in the liver. May be involved in the regulation of RNA degradation by the exosome complex. Potential tumor suppressor in gliomas. This Homo sapiens (Human) protein is Focadhesin.